The following is a 597-amino-acid chain: Elongation factor 4 (597 aa).

The tr-type G domain occupies 2-184 (DHIRNFSIIA…ALIAKVPPPK (183 aa)). Residues 14–19 (DHGKST) and 131–134 (NKID) each bind GTP.

This sequence belongs to the TRAFAC class translation factor GTPase superfamily. Classic translation factor GTPase family. LepA subfamily.

The protein localises to the cell inner membrane. It catalyses the reaction GTP + H2O = GDP + phosphate + H(+). Functionally, required for accurate and efficient protein synthesis under certain stress conditions. May act as a fidelity factor of the translation reaction, by catalyzing a one-codon backward translocation of tRNAs on improperly translocated ribosomes. Back-translocation proceeds from a post-translocation (POST) complex to a pre-translocation (PRE) complex, thus giving elongation factor G a second chance to translocate the tRNAs correctly. Binds to ribosomes in a GTP-dependent manner. This is Elongation factor 4 from Paraburkholderia phymatum (strain DSM 17167 / CIP 108236 / LMG 21445 / STM815) (Burkholderia phymatum).